The chain runs to 189 residues: Large ribosomal subunit protein eL18 (189 aa).

Belongs to the eukaryotic ribosomal protein eL18 family.

Its subcellular location is the cytoplasm. The sequence is that of Large ribosomal subunit protein eL18 (RpL18) from Anopheles gambiae (African malaria mosquito).